Reading from the N-terminus, the 2535-residue chain is Piezo-type mechanosensitive ion channel component 1 (2535 aa).

3 helical membrane-spanning segments follow: residues 13–25 (LLLP…ASLL), 29–44 (ALSL…LPWL), and 59–81 (LLRA…QICL). Asparagine 100 carries an N-linked (GlcNAc...) asparagine glycan. 5 helical membrane-spanning segments follow: residues 122 to 138 (VAPD…CLGL), 193 to 212 (LLVT…AGIA), 215 to 234 (SAFS…WWSC), 246 to 266 (LCVM…CYQT), and 308 to 328 (WPIY…TSLL). The span at 346-357 (DEEHELELDQLE) shows a compositional bias: acidic residues. A disordered region spans residues 346 to 377 (DEEHELELDQLEPEPQARGTTQGATPTTTGPD). Low complexity predominate over residues 358–376 (PEPQARGTTQGATPTTTGP). N-linked (GlcNAc...) asparagine glycosylation is present at asparagine 380. 8 helical membrane passes run 416–436 (LILD…SIMY), 439–454 (WLTF…IWTV), 460–482 (LAML…RYVW), 510–527 (CLDL…WLLL), 572–592 (IYVK…SFAG), 594–614 (LVVY…LFQV), 625–646 (VFWW…TFQF), and 677–693 (LFSS…ACIL). Serine 749 is subject to Phosphoserine. 12 consecutive transmembrane segments (helical) span residues 803 to 814 (LVALYTVWVALK), 818 to 831 (VMNL…AFAL), 846 to 860 (VWTC…LYQL), 913 to 940 (GYIQ…HYRR), 981 to 996 (GLEI…IGQR), 999 to 1014 (FMVI…ILTR), 1028 to 1043 (CLFL…LLCL), 1083 to 1104 (TNLI…VFSA), 1140 to 1166 (YLDM…TGAT), 1172 to 1190 (GLGY…TTLL), 1204 to 1222 (LILY…SLLS), and 1272 to 1288 (IWDS…RRVF). Residues 1325 to 1356 (HRQTEERSLAQLKRQMKRIRAKQEKYRQSQAS) adopt a coiled-coil conformation. 2 disordered regions span residues 1345 to 1383 (AKQE…RTQW) and 1556 to 1597 (SGPV…NTRS). Polar residues predominate over residues 1352–1365 (QSQASRGQLQSTDP). Serine 1372 and serine 1377 each carry phosphoserine. Polar residues predominate over residues 1579–1597 (SSMTDDTGSPLSTGYNTRS). Serine 1614, serine 1618, and serine 1633 each carry phosphoserine. The next 4 membrane-spanning stretches (helical) occupy residues 1644–1687 (PELE…LNHM), 1692–1707 (AASL…WAML), 1716–1734 (FWMT…KYLF), and 1767–1788 (DSYI…SQLL). Basic and acidic residues-rich tracts occupy residues 1801–1811 (PKDHCRSSEKD) and 1842–1867 (PKDH…DLKP). The segment at 1801–1911 (PKDHCRSSEK…GREAAGRKRL (111 aa)) is disordered. The segment covering 1868–1881 (QHRRHISIRFRRRK) has biased composition (basic residues). Transmembrane regions (helical) follow at residues 1965 to 1984 (YALM…FGFW), 2005 to 2021 (PQAF…TMVI), 2036 to 2056 (AFQV…LPAV), 2065 to 2080 (AVAQ…YFAL), and 2181 to 2201 (GLII…MSLI). An intrachain disulfide couples cysteine 2425 to cysteine 2429. A helical membrane pass occupies residues 2446–2466 (LGFLAGYGIVGLYVSIVLVVG).

Belongs to the PIEZO (TC 1.A.75) family. Homotrimer; the homotrimer forms a propeller-shaped Piezo channel with a cation-ion conducting pore. Heterotrimeric interaction may occur between PIEZO1 and PIEZO2. Interacts with PKD2. Interacts with STOM13. Interacts with TMC1, TMC2, PCDH15 and CIB2; the interaction may be part of the MET complex. Interacts with MDFIC (via C-terminus); the interaction prolongs Piezo channel inactivation. Interacts with MDFI (via C-terminus); the interaction prolongs Piezo channel inactivation. As to expression, moderate expression in lung and kidney. Very weak expression in heart, spleen and liver.

The protein resides in the endoplasmic reticulum membrane. It is found in the endoplasmic reticulum-Golgi intermediate compartment membrane. It localises to the cell membrane. The protein localises to the cell projection. Its subcellular location is the lamellipodium membrane. It catalyses the reaction K(+)(in) = K(+)(out). It carries out the reaction Na(+)(in) = Na(+)(out). The enzyme catalyses Ca(2+)(in) = Ca(2+)(out). The catalysed reaction is Mg(2+)(in) = Mg(2+)(out). Regulated by auxillary subunits MDFIC and MDFI. Down-regulated by phosphatidylserines exposed on the cell surface. Divalent ions decrease the single-channel permeability of K(+). Functionally, pore-forming subunit of the mechanosensitive non-specific cation Piezo channel required for rapidly adapting mechanically activated (MA) currents and has a key role in sensing touch and tactile pain. Piezo channels are homotrimeric three-blade propeller-shaped structures that utilize a cap-motion and plug-and-latch mechanism to gate their ion-conducting pathways. Generates currents characterized by a linear current-voltage relationship that are sensitive to ruthenium red and gadolinium. Conductance to monovalent alkali ions is highest for K(+), intermediate for Na(+) and lowest for Li(+). Divalent ions except for Mn(2+) permeate the channel but more slowly than the monovalent ions and they also reduce K(+) currents. Plays a key role in epithelial cell adhesion by maintaining integrin activation through R-Ras recruitment to the ER, most probably in its activated state, and subsequent stimulation of calpain signaling. In inner ear hair cells, PIEZO1/2 subunits may constitute part of the mechanotransducer (MET) non-selective cation channel complex where they may act as pore-forming ion-conducting component in the complex. In the kidney, may contribute to the detection of intraluminal pressure changes and to urine flow sensing. Acts as a shear-stress sensor that promotes endothelial cell organization and alignment in the direction of blood flow through calpain activation. Plays a key role in blood vessel formation and vascular structure in both development and adult physiology. Acts as a sensor of phosphatidylserine (PS) flipping at the plasma membrane and governs morphogenesis of muscle cells. In myoblasts, flippase-mediated PS enrichment at the inner leaflet of plasma membrane triggers channel activation and Ca(2+) influx followed by Rho GTPases signal transduction, leading to assembly of cortical actomyosin fibers and myotube formation. The polypeptide is Piezo-type mechanosensitive ion channel component 1 (Piezo1) (Rattus norvegicus (Rat)).